The following is a 283-amino-acid chain: Pantothenate synthetase (283 aa).

Residue 30-37 (MGNLHAGH) coordinates ATP. The active-site Proton donor is the His37. Residue Gln61 participates in (R)-pantoate binding. Gln61 is a beta-alanine binding site. Residue 149 to 152 (GEKD) participates in ATP binding. Gln155 provides a ligand contact to (R)-pantoate. Residues Val178 and 186 to 189 (LSSR) each bind ATP.

It belongs to the pantothenate synthetase family. Homodimer.

It is found in the cytoplasm. The catalysed reaction is (R)-pantoate + beta-alanine + ATP = (R)-pantothenate + AMP + diphosphate + H(+). Its pathway is cofactor biosynthesis; (R)-pantothenate biosynthesis; (R)-pantothenate from (R)-pantoate and beta-alanine: step 1/1. Its function is as follows. Catalyzes the condensation of pantoate with beta-alanine in an ATP-dependent reaction via a pantoyl-adenylate intermediate. This chain is Pantothenate synthetase, found in Pseudomonas aeruginosa (strain UCBPP-PA14).